Reading from the N-terminus, the 499-residue chain is Guanosine-5'-triphosphate,3'-diphosphate pyrophosphatase (499 aa).

It belongs to the GppA/Ppx family. GppA subfamily.

It catalyses the reaction guanosine 3'-diphosphate 5'-triphosphate + H2O = guanosine 3',5'-bis(diphosphate) + phosphate + H(+). It functions in the pathway purine metabolism; ppGpp biosynthesis; ppGpp from GTP: step 2/2. Catalyzes the conversion of pppGpp to ppGpp. Guanosine pentaphosphate (pppGpp) is a cytoplasmic signaling molecule which together with ppGpp controls the 'stringent response', an adaptive process that allows bacteria to respond to amino acid starvation, resulting in the coordinated regulation of numerous cellular activities. The protein is Guanosine-5'-triphosphate,3'-diphosphate pyrophosphatase of Klebsiella pneumoniae (strain 342).